The primary structure comprises 157 residues: S-ribosylhomocysteine lyase (157 aa).

His54, His58, and Cys124 together coordinate Fe cation.

This sequence belongs to the LuxS family. Homodimer. Fe cation serves as cofactor.

It carries out the reaction S-(5-deoxy-D-ribos-5-yl)-L-homocysteine = (S)-4,5-dihydroxypentane-2,3-dione + L-homocysteine. Its function is as follows. Involved in the synthesis of autoinducer 2 (AI-2) which is secreted by bacteria and is used to communicate both the cell density and the metabolic potential of the environment. The regulation of gene expression in response to changes in cell density is called quorum sensing. Catalyzes the transformation of S-ribosylhomocysteine (RHC) to homocysteine (HC) and 4,5-dihydroxy-2,3-pentadione (DPD). The polypeptide is S-ribosylhomocysteine lyase (Lactobacillus acidophilus (strain ATCC 700396 / NCK56 / N2 / NCFM)).